Here is a 445-residue protein sequence, read N- to C-terminus: Maltoporin (445 aa).

The N-terminal stretch at 1-24 (MITLRKLPLAVAVAAGVMSAQAMA) is a signal peptide.

This sequence belongs to the porin LamB (TC 1.B.3) family. As to quaternary structure, homotrimer formed of three 18-stranded antiparallel beta-barrels, containing three independent channels.

The protein resides in the cell outer membrane. The enzyme catalyses beta-maltose(in) = beta-maltose(out). Functionally, involved in the transport of maltose and maltodextrins. In Shigella flexneri, this protein is Maltoporin.